Consider the following 172-residue polypeptide: RNA pyrophosphohydrolase (172 aa).

A Nudix hydrolase domain is found at 6–149 (GYRLNVGIVI…KRDVYRRAMK (144 aa)). Residues 38 to 59 (GGIDDGESPEQAMFRELYEEVG) carry the Nudix box motif.

The protein belongs to the Nudix hydrolase family. RppH subfamily. A divalent metal cation is required as a cofactor.

In terms of biological role, accelerates the degradation of transcripts by removing pyrophosphate from the 5'-end of triphosphorylated RNA, leading to a more labile monophosphorylated state that can stimulate subsequent ribonuclease cleavage. This chain is RNA pyrophosphohydrolase, found in Vibrio cholerae serotype O1 (strain ATCC 39315 / El Tor Inaba N16961).